Reading from the N-terminus, the 610-residue chain is Phosphomethylpyrimidine synthase (610 aa).

Substrate contacts are provided by residues Asn-216, Met-245, Tyr-274, His-310, 330–332 (SRG), 371–374 (DGLR), and Glu-410. His-414 serves as a coordination point for Zn(2+). Tyr-437 lines the substrate pocket. His-478 lines the Zn(2+) pocket. Residues Cys-558, Cys-561, and Cys-566 each coordinate [4Fe-4S] cluster.

It belongs to the ThiC family. In terms of assembly, homodimer. [4Fe-4S] cluster serves as cofactor.

The catalysed reaction is 5-amino-1-(5-phospho-beta-D-ribosyl)imidazole + S-adenosyl-L-methionine = 4-amino-2-methyl-5-(phosphooxymethyl)pyrimidine + CO + 5'-deoxyadenosine + formate + L-methionine + 3 H(+). The protein operates within cofactor biosynthesis; thiamine diphosphate biosynthesis. Functionally, catalyzes the synthesis of the hydroxymethylpyrimidine phosphate (HMP-P) moiety of thiamine from aminoimidazole ribotide (AIR) in a radical S-adenosyl-L-methionine (SAM)-dependent reaction. This Allorhizobium ampelinum (strain ATCC BAA-846 / DSM 112012 / S4) (Agrobacterium vitis (strain S4)) protein is Phosphomethylpyrimidine synthase.